The primary structure comprises 183 residues: Protein Dr1 (183 aa).

One can recognise a Histone-fold domain in the interval 19 to 82; sequence TLPRASINKI…INAEHVLEAL (64 aa). The tract at residues 92 to 183 is repression of TATA-containing promoters; it reads QEAEAVLHDC…DDDDDDDDDY (92 aa). The disordered stretch occupies residues 155–183; sequence AMVQRPPLADGSVASKPSEDDDDDDDDDY. Positions 173–183 are enriched in acidic residues; that stretch reads EDDDDDDDDDY.

The protein belongs to the NC2 beta/DR1 family. As to quaternary structure, component of the Ada2a-containing (ATAC) complex composed of at least Ada2a, Atac1, Hcf, Ada3, Gcn5, Mocs2B, Charac-14, Atac3, Atac2, NC2beta and wds. Homodimer. Interacts with NC2-alpha/Drap1 to form the dNC2 complex.

It localises to the nucleus. Functionally, bifunctional basic transcription factor. Activates transcription of DPE (Downstream Promoter Element) containing promoters while repressing transcription of promoters which contain TATA elements. Together with Chrac-14, promotes nucleosome sliding of ATP-dependent nucleosome remodeling complexes. In Drosophila melanogaster (Fruit fly), this protein is Protein Dr1 (NC2beta).